A 314-amino-acid chain; its full sequence is 4-hydroxy-3-methylbut-2-enyl diphosphate reductase (314 aa).

Position 12 (Cys12) interacts with [4Fe-4S] cluster. (2E)-4-hydroxy-3-methylbut-2-enyl diphosphate is bound by residues His41 and His74. Dimethylallyl diphosphate-binding residues include His41 and His74. Isopentenyl diphosphate-binding residues include His41 and His74. Cys96 serves as a coordination point for [4Fe-4S] cluster. A (2E)-4-hydroxy-3-methylbut-2-enyl diphosphate-binding site is contributed by His124. Dimethylallyl diphosphate is bound at residue His124. His124 is an isopentenyl diphosphate binding site. The active-site Proton donor is Glu126. Thr167 is a (2E)-4-hydroxy-3-methylbut-2-enyl diphosphate binding site. Residue Cys197 coordinates [4Fe-4S] cluster. 4 residues coordinate (2E)-4-hydroxy-3-methylbut-2-enyl diphosphate: Ser225, Ser226, Asn227, and Ser269. Dimethylallyl diphosphate-binding residues include Ser225, Ser226, Asn227, and Ser269. Isopentenyl diphosphate contacts are provided by Ser225, Ser226, Asn227, and Ser269.

It belongs to the IspH family. It depends on [4Fe-4S] cluster as a cofactor.

It catalyses the reaction isopentenyl diphosphate + 2 oxidized [2Fe-2S]-[ferredoxin] + H2O = (2E)-4-hydroxy-3-methylbut-2-enyl diphosphate + 2 reduced [2Fe-2S]-[ferredoxin] + 2 H(+). It carries out the reaction dimethylallyl diphosphate + 2 oxidized [2Fe-2S]-[ferredoxin] + H2O = (2E)-4-hydroxy-3-methylbut-2-enyl diphosphate + 2 reduced [2Fe-2S]-[ferredoxin] + 2 H(+). It functions in the pathway isoprenoid biosynthesis; dimethylallyl diphosphate biosynthesis; dimethylallyl diphosphate from (2E)-4-hydroxy-3-methylbutenyl diphosphate: step 1/1. The protein operates within isoprenoid biosynthesis; isopentenyl diphosphate biosynthesis via DXP pathway; isopentenyl diphosphate from 1-deoxy-D-xylulose 5-phosphate: step 6/6. In terms of biological role, catalyzes the conversion of 1-hydroxy-2-methyl-2-(E)-butenyl 4-diphosphate (HMBPP) into a mixture of isopentenyl diphosphate (IPP) and dimethylallyl diphosphate (DMAPP). Acts in the terminal step of the DOXP/MEP pathway for isoprenoid precursor biosynthesis. In Histophilus somni (strain 2336) (Haemophilus somnus), this protein is 4-hydroxy-3-methylbut-2-enyl diphosphate reductase.